Reading from the N-terminus, the 361-residue chain is MLTEVCKMGTNKAFFTNEVPEDRYIAAEKISSLKKPATVMIIGDVDTGKTTLTIYLANELISRGFRVSIIDSDVGQKSILPPATISLAFVDTHFSSLEDLTPFAHYFVGTITPSQFFGEMVIGVMKLAELAKKFSDVVLIDTTGMIYGPGVELKRMKIEAIKPDLILALERENELTPIIKGFEDITLKLRVSDKVKEFSRSERKELRREKWKRYFENSRIVTFNVNDILVTGTSMFQGKPIEEGEKNLLERLFKWLILHGRKLGERYFVVKVDTSEGPRVVDKNVVRYFDFSKLSNLLLGLLDKEGFCQGVGILKAINFSEGRLEVLTPVKDISIITEIRFGRIRVREDGEELGLLDREVL.

Glycine 43–threonine 50 provides a ligand contact to ATP.

The cofactor is a divalent metal cation.

It catalyses the reaction a 5'-end dephospho-2'-deoxyribonucleoside-DNA + ATP = a 5'-end 5'-phospho-2'-deoxyribonucleoside-DNA + ADP + H(+). It carries out the reaction a 5'-end dephospho-ribonucleoside-RNA + ATP = a 5'-end 5'-phospho-ribonucleoside-RNA + ADP + H(+). DNA kinase activity is inhibited by 250 mM sodium chloride whereas RNA kinase activity is unaffected. Functionally, polynucleotide kinase that can phosphorylate the 5'-hydroxyl groups of both single-stranded RNA (ssRNA) and single-stranded DNA (ssDNA). Exhibits a strong preference for ssRNA. This Pyrococcus horikoshii (strain ATCC 700860 / DSM 12428 / JCM 9974 / NBRC 100139 / OT-3) protein is Polyribonucleotide 5'-hydroxyl-kinase PH0197.